A 1070-amino-acid chain; its full sequence is MFTVSQTSRAWFIDRARQAREERLVQKERERSAVTIQALVRSFLCRRRLHRDIRKEIDEFFSADESGSSKRSALCIFKIARRLLFICKTTEDSERLEKLCRSILNSMDAENEPKVWYVSLALSKDLTLLWIKQIKSILWHCCELLGQLKPEILQDSRLITLYLTMLVTFTDTSTWKILRGKGESLRPALNHICANIMGHLNQRGLYSVLQVLLTRGLARPRPCLSKGMLTAAFSLALRPVVAAQFSDNLMRPFIIHVMSVPALVAHLSTVAPERLGVLESHDMLRKFIVFLRDRDRCRDACESLEGCHTLCLMGNLLHLGSLSLRLLEEEMDGFVSALTQMLCYCQKYVAQKKSNLTHWHPVLGWFSQPVDYGLNDSMYLITKQLQFLWAVPLIRILFSDILSRKLLEHAEPAPVQPQPSSPQTVLPVKSLLKRAFQKSASVRNILRPVGGRRVDSAEVRKVCNICVLYQTSLTTLTQIRLQILTGLTYLDDLLPKLWAFICELGPHGGLKLFLECLNNDTGESKQLLAMLMLFCDCSRHLITILDDIEVYEEQISFKLEELVTISSFLNSFVFKMIWDGIVENAKGETLELFQSVHGWLMVLYERDCRRRFAPEDHWLRRDLKPGVLFQELDKDRRRAQLVLQHIPHVVPHKNRVLLFRNMVIKEKEKLGLVETSSASPHVTHITIRRSRMLEDGYEQLRQLSQHAMKGVIRVKFVNDLGVDEAGIDQDGVFKEFLEEIIKRVFDPALNLFKTTSGDERLYPSPTSYIHENYLQLFEFVGKMLGKAVYEGIVVDVPFASFFLSQMLGHHHSVFYSSVDELPSLDSEFYKNLTSIKRYDGDIADLGLTLSYDEDVMGQLVCHELVPGGKTIPVTDENKISYIHLMAHFRMHTQIKNQTAALISGFRSIIKPEWIRMFSTPELQRLISGDNAEIDLEDLKKHTVYYGGFHGSHRVIIWLWDILASDFTPEERAMFLKFVTSCSRPPLLGFAYLKPPFSIRCVEVSDDQDTGDTLGSVLRGFFTIRKREPGGRLPTSSTCFNLLKLPNYSKKSVLREKLRYAISMNTGFELS.

An N-acetylmethionine modification is found at M1. The IQ domain occupies 29–58 (RERSAVTIQALVRSFLCRRRLHRDIRKEID). S421 carries the phosphoserine modification. In terms of domain architecture, HECT spans 704 to 1070 (SQHAMKGVIR…ISMNTGFELS (367 aa)). Catalysis depends on C1038, which acts as the Glycyl thioester intermediate.

As to expression, widely expressed. High expression is observed in developing central nervous system.

It localises to the postsynaptic density. It carries out the reaction S-ubiquitinyl-[E2 ubiquitin-conjugating enzyme]-L-cysteine + [acceptor protein]-L-lysine = [E2 ubiquitin-conjugating enzyme]-L-cysteine + N(6)-ubiquitinyl-[acceptor protein]-L-lysine.. The protein operates within protein modification; protein ubiquitination. E3 ubiquitin-protein ligase which accepts ubiquitin from an E2 ubiquitin-conjugating enzyme in the form of a thioester and then directly transfers the ubiquitin to targeted substrates. Ubiquitinates BCKDK and targets it for degradation, thereby regulating various metabolic processes. Involved in the positive regulation of neurite branching in hippocampal neurons and the control of neuronal spine number and morphology, through the ubiquitination of PPP3CC. This Mus musculus (Mouse) protein is Ubiquitin-protein ligase E3B (Ube3b).